The chain runs to 173 residues: MKTWHMVVVIGFLATLAQTSLALKEEDCEVCVKTVRRFADSLDDSTKKDYKQIETAFKKFCKAQKNKEHRFCYYLGGLEESATGILNELSKPLSWSMPAEKICEKLKKKDAQICDLRYEKQIDLNSVDLKKLKVRDLKKILNDWDESCDGCLEKGDFIKRIEELKPKYSRSEL.

The signal sequence occupies residues 1 to 22 (MKTWHMVVVIGFLATLAQTSLA). 4 disulfides stabilise this stretch: C28-C114, C31-C103, C61-C72, and C148-C151.

It belongs to the ARMET family.

The protein resides in the secreted. Its function is as follows. Required during the maturation of the embryonic nervous system for maintenance of neuronal and cuticular connectivity. Essential for maintenance of dopaminergic neurons and dopamine levels. The sequence is that of Mesencephalic astrocyte-derived neurotrophic factor homolog from Drosophila simulans (Fruit fly).